Reading from the N-terminus, the 466-residue chain is Adenosylhomocysteinase (466 aa).

Thr57, Asp132, and Glu192 together coordinate substrate. 193–195 (TTT) lines the NAD(+) pocket. Substrate-binding residues include Lys222 and Asp226. NAD(+) is bound by residues Asn227, 256–261 (GYGDVG), Glu279, Asn314, 335–337 (IGH), and Asn380.

It belongs to the adenosylhomocysteinase family. NAD(+) serves as cofactor.

Its subcellular location is the cytoplasm. It carries out the reaction S-adenosyl-L-homocysteine + H2O = L-homocysteine + adenosine. It participates in amino-acid biosynthesis; L-homocysteine biosynthesis; L-homocysteine from S-adenosyl-L-homocysteine: step 1/1. In terms of biological role, may play a key role in the regulation of the intracellular concentration of adenosylhomocysteine. The sequence is that of Adenosylhomocysteinase from Rhizobium meliloti (strain 1021) (Ensifer meliloti).